A 387-amino-acid polypeptide reads, in one-letter code: 4-hydroxy-3-methylbut-2-en-1-yl diphosphate synthase (flavodoxin) (387 aa).

The [4Fe-4S] cluster site is built by C280, C283, C315, and E322.

Belongs to the IspG family. [4Fe-4S] cluster is required as a cofactor.

It catalyses the reaction (2E)-4-hydroxy-3-methylbut-2-enyl diphosphate + oxidized [flavodoxin] + H2O + 2 H(+) = 2-C-methyl-D-erythritol 2,4-cyclic diphosphate + reduced [flavodoxin]. It functions in the pathway isoprenoid biosynthesis; isopentenyl diphosphate biosynthesis via DXP pathway; isopentenyl diphosphate from 1-deoxy-D-xylulose 5-phosphate: step 5/6. Functionally, converts 2C-methyl-D-erythritol 2,4-cyclodiphosphate (ME-2,4cPP) into 1-hydroxy-2-methyl-2-(E)-butenyl 4-diphosphate. This Mycobacterium bovis (strain BCG / Pasteur 1173P2) protein is 4-hydroxy-3-methylbut-2-en-1-yl diphosphate synthase (flavodoxin).